A 386-amino-acid polypeptide reads, in one-letter code: S-adenosylmethionine synthase (386 aa).

E8 is a Mg(2+) binding site. Residue H14 participates in ATP binding. A K(+)-binding site is contributed by E42. Positions 55 and 98 each coordinate L-methionine. Residues 166–168, 234–237, D245, 251–252, A268, K272, and K276 contribute to the ATP site; these read DGK, SGRF, and RK. D245 contacts L-methionine. K276 serves as a coordination point for L-methionine.

It belongs to the AdoMet synthase family. Homotetramer. Mn(2+) serves as cofactor. It depends on Mg(2+) as a cofactor. The cofactor is Co(2+). K(+) is required as a cofactor.

The protein localises to the cytoplasm. The enzyme catalyses L-methionine + ATP + H2O = S-adenosyl-L-methionine + phosphate + diphosphate. It participates in amino-acid biosynthesis; S-adenosyl-L-methionine biosynthesis; S-adenosyl-L-methionine from L-methionine: step 1/1. Functionally, catalyzes the formation of S-adenosylmethionine from methionine and ATP. The reaction comprises two steps that are both catalyzed by the same enzyme: formation of S-adenosylmethionine (AdoMet) and triphosphate, and subsequent hydrolysis of the triphosphate. This is S-adenosylmethionine synthase (METK) from Ostreococcus tauri.